We begin with the raw amino-acid sequence, 106 residues long: Urease subunit beta (106 aa).

This sequence belongs to the urease beta subunit family. Heterotrimer of UreA (gamma), UreB (beta) and UreC (alpha) subunits. Three heterotrimers associate to form the active enzyme.

The protein localises to the cytoplasm. The catalysed reaction is urea + 2 H2O + H(+) = hydrogencarbonate + 2 NH4(+). It functions in the pathway nitrogen metabolism; urea degradation; CO(2) and NH(3) from urea (urease route): step 1/1. The polypeptide is Urease subunit beta (Parasynechococcus marenigrum (strain WH8102)).